The chain runs to 304 residues: UDP-3-O-acyl-N-acetylglucosamine deacetylase (304 aa).

Residues histidine 78, histidine 237, and aspartate 241 each contribute to the Zn(2+) site. Histidine 264 acts as the Proton donor in catalysis.

Belongs to the LpxC family. Zn(2+) serves as cofactor.

It carries out the reaction a UDP-3-O-[(3R)-3-hydroxyacyl]-N-acetyl-alpha-D-glucosamine + H2O = a UDP-3-O-[(3R)-3-hydroxyacyl]-alpha-D-glucosamine + acetate. Its pathway is glycolipid biosynthesis; lipid IV(A) biosynthesis; lipid IV(A) from (3R)-3-hydroxytetradecanoyl-[acyl-carrier-protein] and UDP-N-acetyl-alpha-D-glucosamine: step 2/6. Its function is as follows. Catalyzes the hydrolysis of UDP-3-O-myristoyl-N-acetylglucosamine to form UDP-3-O-myristoylglucosamine and acetate, the committed step in lipid A biosynthesis. In Legionella pneumophila (strain Lens), this protein is UDP-3-O-acyl-N-acetylglucosamine deacetylase.